The sequence spans 254 residues: Proteasome subunit alpha (254 aa).

A disordered region spans residues 231 to 254 (ESGAASADGEAETEAETDSGSDEE). Positions 239–254 (GEAETEAETDSGSDEE) are enriched in acidic residues.

This sequence belongs to the peptidase T1A family. As to quaternary structure, the 20S proteasome core is composed of 14 alpha and 14 beta subunits that assemble into four stacked heptameric rings, resulting in a barrel-shaped structure. The two inner rings, each composed of seven catalytic beta subunits, are sandwiched by two outer rings, each composed of seven alpha subunits. The catalytic chamber with the active sites is on the inside of the barrel. Has probably a gated structure, the ends of the cylinder being occluded by the N-termini of the alpha-subunits. Is likely capped by the proteasome-associated ATPase, ARC. In terms of processing, the N-terminus is blocked.

It localises to the cytoplasm. The protein operates within protein degradation; proteasomal Pup-dependent pathway. With respect to regulation, the formation of the proteasomal ATPase ARC-20S proteasome complex, likely via the docking of the C-termini of ARC into the intersubunit pockets in the alpha-rings, may trigger opening of the gate for substrate entry. Interconversion between the open-gate and close-gate conformations leads to a dynamic regulation of the 20S proteasome proteolysis activity. Peptidolytic activity is completely inhibited by lactacystin, and to a lesser extent, by N-acetyl-Leu-Leu-norleucinal (Ac-LLnL) and benzoyloxycarbonyl-Leu-Leu-Leu-vinylsulfone (Z-LLL-VS) in vitro. Its function is as follows. Component of the proteasome core, a large protease complex with broad specificity involved in protein degradation. The S.coelicolor proteasome is able to cleave oligopeptides after hydrophobic residues, but not after basic or acidic residues, thus displaying chymotrypsin-like activity but not trypsin-like activity. This chain is Proteasome subunit alpha, found in Streptomyces coelicolor (strain ATCC BAA-471 / A3(2) / M145).